Here is a 327-residue protein sequence, read N- to C-terminus: Undecaprenyl-phosphate 4-deoxy-4-formamido-L-arabinose transferase (327 aa).

2 helical membrane-spanning segments follow: residues 236–256 (LSIFGSVIALLGFAFGLLLVV) and 270–290 (VFMLFAVLFMFIGAQFIGMGL).

The protein belongs to the glycosyltransferase 2 family.

It is found in the cell inner membrane. The catalysed reaction is UDP-4-deoxy-4-formamido-beta-L-arabinose + di-trans,octa-cis-undecaprenyl phosphate = 4-deoxy-4-formamido-alpha-L-arabinopyranosyl di-trans,octa-cis-undecaprenyl phosphate + UDP. The protein operates within glycolipid biosynthesis; 4-amino-4-deoxy-alpha-L-arabinose undecaprenyl phosphate biosynthesis; 4-amino-4-deoxy-alpha-L-arabinose undecaprenyl phosphate from UDP-4-deoxy-4-formamido-beta-L-arabinose and undecaprenyl phosphate: step 1/2. Its pathway is bacterial outer membrane biogenesis; lipopolysaccharide biosynthesis. Catalyzes the transfer of 4-deoxy-4-formamido-L-arabinose from UDP to undecaprenyl phosphate. The modified arabinose is attached to lipid A and is required for resistance to polymyxin and cationic antimicrobial peptides. This Klebsiella pneumoniae (strain 342) protein is Undecaprenyl-phosphate 4-deoxy-4-formamido-L-arabinose transferase.